Here is a 392-residue protein sequence, read N- to C-terminus: Putative pectate lyase 21 (392 aa).

Residues 1–21 (MSIVCTFFLFLLNTSFAFAFA) form the signal peptide. Asparagine 38 carries an N-linked (GlcNAc...) asparagine glycan. Residues aspartate 189, aspartate 213, and aspartate 217 each contribute to the Ca(2+) site. Asparagine 220 carries N-linked (GlcNAc...) asparagine glycosylation. Residue arginine 269 is part of the active site.

It belongs to the polysaccharide lyase 1 family. Ca(2+) is required as a cofactor.

The enzyme catalyses Eliminative cleavage of (1-&gt;4)-alpha-D-galacturonan to give oligosaccharides with 4-deoxy-alpha-D-galact-4-enuronosyl groups at their non-reducing ends.. The protein operates within glycan metabolism; pectin degradation; 2-dehydro-3-deoxy-D-gluconate from pectin: step 2/5. This is Putative pectate lyase 21 from Arabidopsis thaliana (Mouse-ear cress).